Here is a 495-residue protein sequence, read N- to C-terminus: Putative aldehyde dehydrogenase AldA (495 aa).

212-218 lines the NAD(+) pocket; it reads GKGSESG. Catalysis depends on residues Glu256 and Cys290.

The protein belongs to the aldehyde dehydrogenase family.

It catalyses the reaction an aldehyde + NAD(+) + H2O = a carboxylate + NADH + 2 H(+). In Staphylococcus aureus (strain Mu50 / ATCC 700699), this protein is Putative aldehyde dehydrogenase AldA (aldA).